Reading from the N-terminus, the 446-residue chain is Glutamate-1-semialdehyde 2,1-aminomutase (446 aa).

The residue at position 278 (K278) is an N6-(pyridoxal phosphate)lysine.

It belongs to the class-III pyridoxal-phosphate-dependent aminotransferase family. HemL subfamily. Homodimer. Requires pyridoxal 5'-phosphate as cofactor.

Its subcellular location is the cytoplasm. It carries out the reaction (S)-4-amino-5-oxopentanoate = 5-aminolevulinate. It participates in porphyrin-containing compound metabolism; protoporphyrin-IX biosynthesis; 5-aminolevulinate from L-glutamyl-tRNA(Glu): step 2/2. This Deinococcus geothermalis (strain DSM 11300 / CIP 105573 / AG-3a) protein is Glutamate-1-semialdehyde 2,1-aminomutase.